A 399-amino-acid chain; its full sequence is Elongation factor Tu (399 aa).

One can recognise a tr-type G domain in the interval 10–209 (KPHVNIGTIG…AVDSYIPTPT (200 aa)). The tract at residues 19 to 26 (GHVDHGKT) is G1. GTP is bound at residue 19 to 26 (GHVDHGKT). Residue Thr-26 participates in Mg(2+) binding. Residues 60-64 (GITIA) are G2. Residues 81 to 84 (DCPG) form a G3 region. GTP contacts are provided by residues 81–85 (DCPGH) and 136–139 (NKAD). The interval 136–139 (NKAD) is G4. The G5 stretch occupies residues 174–176 (SAL).

It belongs to the TRAFAC class translation factor GTPase superfamily. Classic translation factor GTPase family. EF-Tu/EF-1A subfamily. In terms of assembly, monomer.

It is found in the cytoplasm. The catalysed reaction is GTP + H2O = GDP + phosphate + H(+). Its function is as follows. GTP hydrolase that promotes the GTP-dependent binding of aminoacyl-tRNA to the A-site of ribosomes during protein biosynthesis. This is Elongation factor Tu from Campylobacter jejuni (strain RM1221).